Here is a 192-residue protein sequence, read N- to C-terminus: MISISDTAQAHFRKLLEKQPDGTNIRVFVVNPGTQNAECGVSYCPPDAVDPEDQHLPFSGFDCLVDPLSAPFLVDATIDFVTDQMGSQLTLKAPNAKMRKVADDAPLIDRIEYVLMSEVNPMLAGHGGKVTLVELTEDKLAILQFGGGCNGCSMVDYTLKEGIEKQLLEKFPGELNGVKDATEHQRGDHSYY.

[4Fe-4S] cluster is bound by residues Cys149 and Cys152.

The protein belongs to the NfuA family. In terms of assembly, homodimer. It depends on [4Fe-4S] cluster as a cofactor.

Its function is as follows. Involved in iron-sulfur cluster biogenesis. Binds a 4Fe-4S cluster, can transfer this cluster to apoproteins, and thereby intervenes in the maturation of Fe/S proteins. Could also act as a scaffold/chaperone for damaged Fe/S proteins. The polypeptide is Fe/S biogenesis protein NfuA (Aeromonas hydrophila subsp. hydrophila (strain ATCC 7966 / DSM 30187 / BCRC 13018 / CCUG 14551 / JCM 1027 / KCTC 2358 / NCIMB 9240 / NCTC 8049)).